The primary structure comprises 108 residues: Nucleoid-associated protein mma_2329 (108 aa).

This sequence belongs to the YbaB/EbfC family. Homodimer.

The protein localises to the cytoplasm. It is found in the nucleoid. Binds to DNA and alters its conformation. May be involved in regulation of gene expression, nucleoid organization and DNA protection. The sequence is that of Nucleoid-associated protein mma_2329 from Janthinobacterium sp. (strain Marseille) (Minibacterium massiliensis).